The primary structure comprises 293 residues: Ribosomal protein L11 methyltransferase (293 aa).

S-adenosyl-L-methionine is bound by residues Thr-145, Gly-166, Asp-188, and Asn-230.

This sequence belongs to the methyltransferase superfamily. PrmA family.

It is found in the cytoplasm. It carries out the reaction L-lysyl-[protein] + 3 S-adenosyl-L-methionine = N(6),N(6),N(6)-trimethyl-L-lysyl-[protein] + 3 S-adenosyl-L-homocysteine + 3 H(+). In terms of biological role, methylates ribosomal protein L11. The polypeptide is Ribosomal protein L11 methyltransferase (Serratia proteamaculans (strain 568)).